Reading from the N-terminus, the 114-residue chain is Iron-sulfur cluster insertion protein ErpA (114 aa).

Positions 42, 106, and 108 each coordinate iron-sulfur cluster.

It belongs to the HesB/IscA family. Homodimer. The cofactor is iron-sulfur cluster.

Required for insertion of 4Fe-4S clusters for at least IspG. The protein is Iron-sulfur cluster insertion protein ErpA of Klebsiella pneumoniae (strain 342).